Consider the following 127-residue polypeptide: Photosystem II reaction center Psb28 protein (127 aa).

The disordered stretch occupies residues 108 to 127 (LGYSQSQDSDQTEGADNQQA). Over residues 109–127 (GYSQSQDSDQTEGADNQQA) the composition is skewed to polar residues.

The protein belongs to the Psb28 family. Part of the photosystem II complex.

The protein resides in the cellular thylakoid membrane. In Synechococcus sp. (strain CC9605), this protein is Photosystem II reaction center Psb28 protein.